The sequence spans 112 residues: Nitrogenase iron-iron protein delta chain (112 aa).

As to quaternary structure, hexamer of two alpha, two beta, and two delta chains. Iron-sulfur cluster serves as cofactor.

It catalyses the reaction N2 + 8 reduced [2Fe-2S]-[ferredoxin] + 16 ATP + 16 H2O = H2 + 8 oxidized [2Fe-2S]-[ferredoxin] + 2 NH4(+) + 16 ADP + 16 phosphate + 6 H(+). Its function is as follows. The key enzymatic reactions in nitrogen fixation are catalyzed by the nitrogenase complex, which has 2 components: the iron protein (component 2) and a component 1 which is either a molybdenum-iron protein, a vanadium-iron, or an iron-iron protein. This is Nitrogenase iron-iron protein delta chain (anfG) from Azomonas macrocytogenes (Azotobacter macrocytogenes).